The following is an 86-amino-acid chain: Neuropeptide precursor capa-1 (86 aa).

Positions 1–19 (MLLWIVATLLIFSLPVSTA) are cleaved as a signal peptide.

In terms of tissue distribution, expressed in two pairs of neurons in the anterior part of the nervous system (at protein level).

Functionally, encodes at least three neuropeptides: two of the periviscerokinin family (APHPSSALLVPYPRV-amide and LYMARV-amide) and one pyrokinin (AFFYTPRI-amide). Its function is as follows. Putative ligand for neuromedin U receptor homolog nmur-2. The polypeptide is Neuropeptide precursor capa-1 (Caenorhabditis elegans).